The primary structure comprises 129 residues: Small ribosomal subunit protein uS11c (129 aa).

The protein belongs to the universal ribosomal protein uS11 family. In terms of assembly, part of the 30S ribosomal subunit.

Its subcellular location is the plastid. The protein resides in the chloroplast. The polypeptide is Small ribosomal subunit protein uS11c (Rhodomonas salina (Cryptomonas salina)).